We begin with the raw amino-acid sequence, 332 residues long: Glycerol-3-phosphate dehydrogenase [NAD(P)+] (332 aa).

Residues W11, R30, and K108 each coordinate NADPH. K108, G137, and S139 together coordinate sn-glycerol 3-phosphate. A141 serves as a coordination point for NADPH. 5 residues coordinate sn-glycerol 3-phosphate: K192, D245, S255, R256, and N257. The active-site Proton acceptor is the K192. R256 lines the NADPH pocket. V280 and E282 together coordinate NADPH.

The protein belongs to the NAD-dependent glycerol-3-phosphate dehydrogenase family.

It is found in the cytoplasm. The enzyme catalyses sn-glycerol 3-phosphate + NAD(+) = dihydroxyacetone phosphate + NADH + H(+). It carries out the reaction sn-glycerol 3-phosphate + NADP(+) = dihydroxyacetone phosphate + NADPH + H(+). The protein operates within membrane lipid metabolism; glycerophospholipid metabolism. In terms of biological role, catalyzes the reduction of the glycolytic intermediate dihydroxyacetone phosphate (DHAP) to sn-glycerol 3-phosphate (G3P), the key precursor for phospholipid synthesis. The sequence is that of Glycerol-3-phosphate dehydrogenase [NAD(P)+] from Burkholderia mallei (strain ATCC 23344).